The following is a 320-amino-acid chain: uncharacterized protein (320 aa).

The FHA domain maps to 22-86 (KTIGRSSSFD…IRDLNNKTGT (65 aa)). The tract at residues 242-264 (TDTDTTEEKEEEEEKEEGDDEEG) is disordered.

This is an uncharacterized protein from Saccharomyces cerevisiae (strain ATCC 204508 / S288c) (Baker's yeast).